We begin with the raw amino-acid sequence, 289 residues long: Protoheme IX farnesyltransferase 2 (289 aa).

9 helical membrane-spanning segments follow: residues Leu-13 to Ser-33, Ile-37 to Phe-57, Leu-86 to Leu-106, Val-109 to Leu-129, Ile-137 to Gly-157, Val-159 to Trp-179, Glu-207 to Ile-227, Val-232 to Ala-252, and Ala-267 to Val-287.

Belongs to the UbiA prenyltransferase family. Protoheme IX farnesyltransferase subfamily.

It localises to the cell membrane. It catalyses the reaction heme b + (2E,6E)-farnesyl diphosphate + H2O = Fe(II)-heme o + diphosphate. The protein operates within porphyrin-containing compound metabolism; heme O biosynthesis; heme O from protoheme: step 1/1. Functionally, converts heme B (protoheme IX) to heme O by substitution of the vinyl group on carbon 2 of heme B porphyrin ring with a hydroxyethyl farnesyl side group. The chain is Protoheme IX farnesyltransferase 2 from Picrophilus torridus (strain ATCC 700027 / DSM 9790 / JCM 10055 / NBRC 100828 / KAW 2/3).